Here is a 231-residue protein sequence, read N- to C-terminus: Endonuclease NucS (231 aa).

The protein belongs to the NucS endonuclease family.

The protein resides in the cytoplasm. Cleaves both 3' and 5' ssDNA extremities of branched DNA structures. The chain is Endonuclease NucS from Arthrobacter sp. (strain FB24).